The primary structure comprises 480 residues: Methylenetetrahydrofolate--tRNA-(uracil-5-)-methyltransferase TrmFO (480 aa).

Position 15–20 (15–20 (GGGLAG)) interacts with FAD.

It belongs to the MnmG family. TrmFO subfamily. FAD is required as a cofactor.

Its subcellular location is the cytoplasm. The enzyme catalyses uridine(54) in tRNA + (6R)-5,10-methylene-5,6,7,8-tetrahydrofolate + NADH + H(+) = 5-methyluridine(54) in tRNA + (6S)-5,6,7,8-tetrahydrofolate + NAD(+). The catalysed reaction is uridine(54) in tRNA + (6R)-5,10-methylene-5,6,7,8-tetrahydrofolate + NADPH + H(+) = 5-methyluridine(54) in tRNA + (6S)-5,6,7,8-tetrahydrofolate + NADP(+). In terms of biological role, catalyzes the folate-dependent formation of 5-methyl-uridine at position 54 (M-5-U54) in all tRNAs. The polypeptide is Methylenetetrahydrofolate--tRNA-(uracil-5-)-methyltransferase TrmFO (Caulobacter sp. (strain K31)).